Reading from the N-terminus, the 391-residue chain is Oxytocin receptor (391 aa).

At methionine 1–leucine 38 the chain is on the extracellular side. 3 N-linked (GlcNAc...) asparagine glycosylation sites follow: asparagine 8, asparagine 15, and asparagine 26. The helical transmembrane segment at alanine 39 to alanine 63 threads the bilayer. The Cytoplasmic segment spans residues leucine 64–leucine 74. The chain crosses the membrane as a helical span at residues phenylalanine 75–leucine 97. Residues leucine 98 to arginine 113 lie on the Extracellular side of the membrane. An intrachain disulfide couples cysteine 112 to cysteine 187. The chain crosses the membrane as a helical span at residues leucine 114–leucine 135. Over aspartate 136–arginine 154 the chain is Cytoplasmic. A helical transmembrane segment spans residues leucine 155 to phenylalanine 175. Over serine 176 to threonine 202 the chain is Extracellular. Residues tryptophan 203–phenylalanine 225 traverse the membrane as a helical segment. Residues lysine 226–lysine 277 lie on the Cytoplasmic side of the membrane. Residues methionine 278–lysine 296 traverse the membrane as a helical segment. Residues glutamine 297–serine 311 lie on the Extracellular side of the membrane. A helical membrane pass occupies residues alanine 312–phenylalanine 334. The Cytoplasmic portion of the chain corresponds to threonine 335 to valine 391. Serine 370 is subject to Phosphoserine.

The protein belongs to the G-protein coupled receptor 1 family. Vasopressin/oxytocin receptor subfamily.

Its subcellular location is the cell membrane. Functionally, receptor for oxytocin. The activity of this receptor is mediated by G proteins which activate a phosphatidylinositol-calcium second messenger system. The protein is Oxytocin receptor (OXTR) of Ovis aries (Sheep).